Here is a 192-residue protein sequence, read N- to C-terminus: Ribosomal RNA small subunit methyltransferase G (192 aa).

S-adenosyl-L-methionine is bound by residues G63, L68, 112–113, and R125; that span reads IE.

This sequence belongs to the methyltransferase superfamily. RNA methyltransferase RsmG family.

It localises to the cytoplasm. It carries out the reaction guanosine(527) in 16S rRNA + S-adenosyl-L-methionine = N(7)-methylguanosine(527) in 16S rRNA + S-adenosyl-L-homocysteine. In terms of biological role, specifically methylates the N7 position of guanine in position 527 of 16S rRNA. In Rickettsia africae (strain ESF-5), this protein is Ribosomal RNA small subunit methyltransferase G.